The primary structure comprises 353 residues: DNA polymerase IV (353 aa).

The UmuC domain occupies 4 to 185 (IIHVDMDCFF…LPLSKIPGVG (182 aa)). Residues aspartate 8 and aspartate 103 each contribute to the Mg(2+) site. Glutamate 104 is an active-site residue.

This sequence belongs to the DNA polymerase type-Y family. In terms of assembly, monomer. Mg(2+) serves as cofactor.

The protein resides in the cytoplasm. It carries out the reaction DNA(n) + a 2'-deoxyribonucleoside 5'-triphosphate = DNA(n+1) + diphosphate. In terms of biological role, poorly processive, error-prone DNA polymerase involved in untargeted mutagenesis. Copies undamaged DNA at stalled replication forks, which arise in vivo from mismatched or misaligned primer ends. These misaligned primers can be extended by PolIV. Exhibits no 3'-5' exonuclease (proofreading) activity. May be involved in translesional synthesis, in conjunction with the beta clamp from PolIII. The chain is DNA polymerase IV from Serratia proteamaculans (strain 568).